The primary structure comprises 549 residues: Solute carrier family 22 member 6 (549 aa).

At 1–23 the chain is on the cytoplasmic side; that stretch reads MAFNDLLLQLGGVGRFQKIQVTL. A helical transmembrane segment spans residues 24–44; that stretch reads VILPLILLASHNTLQNFTAAI. Residues 45–135 lie on the Extracellular side of the membrane; it reads PTHHCRPPAD…LVCSHRALRQ (91 aa). N-linked (GlcNAc...) asparagine glycans are attached at residues N56, N92, and N113. A helical membrane pass occupies residues 136–156; sequence LAQSLYMMGVLLGAMTFGCLA. The Cytoplasmic portion of the chain corresponds to 157-164; sequence DRLGRRKV. A helical transmembrane segment spans residues 165-185; that stretch reads LIFNYLQTAVSGTCAAFAPNF. At 186–195 the chain is on the extracellular side; sequence PAYCAFRFLS. A helical transmembrane segment spans residues 196–216; it reads GMSTAGVVLNCMTLNVEWMPI. At 217–224 the chain is on the cytoplasmic side; the sequence is HTRAYVGT. Residues 225 to 245 form a helical membrane-spanning segment; sequence LTGYVYSLGQFLLAGMAYAVP. At 246-248 the chain is on the extracellular side; the sequence is HWR. A helical transmembrane segment spans residues 249–269; sequence YLQLLVSAPFFAFFIYSWFFI. Residues 270 to 337 are Cytoplasmic-facing; the sequence is ESARWYASSG…ELIRCPALRR (68 aa). Residues 338-358 form a helical membrane-spanning segment; sequence LFLCLSMLWFATSFAYYGLVM. At 359 to 368 the chain is on the extracellular side; the sequence is DLQGFGVSIY. The chain crosses the membrane as a helical span at residues 369–389; that stretch reads LIQVIFGAVDLPAKLVSFLVI. Topologically, residues 390–395 are cytoplasmic; sequence NNVGRR. The helical transmembrane segment at 396–416 threads the bilayer; sequence PAQMASLLLAGICILINGVVP. Residues 417–425 are Extracellular-facing; that stretch reads KDKSIVRTS. A helical membrane pass occupies residues 426 to 446; the sequence is LAVLGKGCLASSFNCIFLYTG. The Cytoplasmic portion of the chain corresponds to 447-456; that stretch reads EVYPTMIRQT. A helical membrane pass occupies residues 457-477; it reads GLGMGSTLARVGSIVSPLVSM. Residues 478–484 are Extracellular-facing; sequence TAELYPS. Residues 485–505 form a helical membrane-spanning segment; the sequence is VPLFIYGAVPVAASAAIALLP. Topologically, residues 506–549 are cytoplasmic; it reads ETLGQPLPDTVQDVENRRRGKTRKQQEELQKQMVPLQASAQVKN. The disordered stretch occupies residues 521-549; the sequence is NRRRGKTRKQQEELQKQMVPLQASAQVKN.

Belongs to the major facilitator (TC 2.A.1) superfamily. Organic cation transporter (TC 2.A.1.19) family. Post-translationally, glycosylated. Glycosylation is necessary for proper targeting of the transporter to the plasma membrane.

The protein localises to the basolateral cell membrane. It is found in the basal cell membrane. It carries out the reaction (6R)-L-erythro-5,6,7,8-tetrahydrobiopterin(out) + a dicarboxylate(in) = (6R)-L-erythro-5,6,7,8-tetrahydrobiopterin(in) + a dicarboxylate(out). The enzyme catalyses L-erythro-7,8-dihydrobiopterin(out) + a dicarboxylate(in) = L-erythro-7,8-dihydrobiopterin(in) + a dicarboxylate(out). The catalysed reaction is L-sepiapterin(out) + a dicarboxylate(in) = L-sepiapterin(in) + a dicarboxylate(out). It catalyses the reaction prostaglandin F2alpha(out) + a dicarboxylate(in) = prostaglandin F2alpha(in) + a dicarboxylate(out). It carries out the reaction prostaglandin E2(out) + a dicarboxylate(in) = prostaglandin E2(in) + a dicarboxylate(out). The enzyme catalyses 3',5'-cyclic AMP(out) + a dicarboxylate(in) = 3',5'-cyclic AMP(in) + a dicarboxylate(out). The catalysed reaction is 3',5'-cyclic GMP(out) + a dicarboxylate(in) = 3',5'-cyclic GMP(in) + a dicarboxylate(out). It catalyses the reaction urate(out) + a dicarboxylate(in) = urate(in) + a dicarboxylate(out). It carries out the reaction kynurenate(out) + glutarate(in) = kynurenate(in) + glutarate(out). The enzyme catalyses (indol-3-yl)acetate(out) + a dicarboxylate(in) = (indol-3-yl)acetate(in) + a dicarboxylate(out). The catalysed reaction is indoxyl sulfate(out) + a dicarboxylate(in) = indoxyl sulfate(in) + a dicarboxylate(out). It catalyses the reaction N-benzoylglycine(out) + a dicarboxylate(in) = N-benzoylglycine(in) + a dicarboxylate(out). It carries out the reaction 3-carboxy-4-methyl-5-propyl-2-furanpropanoate(out) + a dicarboxylate(in) = 3-carboxy-4-methyl-5-propyl-2-furanpropanoate(in) + a dicarboxylate(out). In terms of biological role, secondary active transporter that functions as a Na(+)-independent organic anion (OA)/dicarboxylate antiporter where the uptake of one molecule of OA into the cell is coupled with an efflux of one molecule of intracellular dicarboxylate such as 2-oxoglutarate or glutarate. Mediates the uptake of OA across the basolateral side of proximal tubule epithelial cells, thereby contributing to the renal elimination of endogenous OA from the systemic circulation into the urine. Functions as a biopterin transporters involved in the uptake and the secretion of coenzymes tetrahydrobiopterin (BH4), dihydrobiopterin (BH2) and sepiapterin to urine, thereby determining baseline levels of blood biopterins. Transports prostaglandin E2 (PGE2) and prostaglandin F2-alpha (PGF2-alpha) and may contribute to their renal excretion. Also mediates the uptake of cyclic nucleotides such as cAMP and cGMP. Involved in the transport of neuroactive tryptophan metabolites kynurenate (KYNA) and xanthurenate (XA) and may contribute to their secretion from the brain. May transport glutamate. Also involved in the disposition of uremic toxins and potentially toxic xenobiotics by the renal organic anion secretory pathway, helping reduce their undesired toxicological effects on the body. Uremic toxins include the indoxyl sulfate (IS), hippurate/N-benzoylglycine (HA), indole acetate (IA), 3-carboxy-4- methyl-5-propyl-2-furanpropionate (CMPF) and urate. Xenobiotics include the mycotoxin ochratoxin (OTA). May also contribute to the transport of organic compounds in testes across the blood-testis-barrier. In Bos taurus (Bovine), this protein is Solute carrier family 22 member 6.